The following is a 289-amino-acid chain: (3R)-3-[(carboxymethyl)amino]fatty acid oxygenase/decarboxylase (289 aa).

The a (3R)-3-[(carboxymethyl)amino]fatty acid site is built by Tyr-65, Tyr-70, and Gly-93. Fe(2+) is bound by residues His-97 and Asp-99. Tyr-100 and Lys-158 together coordinate a (3R)-3-[(carboxymethyl)amino]fatty acid. Residue His-260 coordinates Fe(2+). His-264 serves as a coordination point for 2-oxoglutarate. Arg-275 contributes to the a (3R)-3-[(carboxymethyl)amino]fatty acid binding site.

This sequence belongs to the TfdA dioxygenase family. Fe(2+) is required as a cofactor.

The catalysed reaction is a (3R)-3-[(carboxymethyl)amino]fatty acid + 2 2-oxoglutarate + 2 O2 = a (3R)-3-isocyanyl-fatty acid + 2 succinate + 3 CO2 + 2 H2O. The enzyme catalyses a (3R)-3-[(carboxymethyl)amino]fatty acid + 2-oxoglutarate + O2 = a (3R)-3-{[carboxy(hydroxy)methyl]amino}fatty acid + succinate + CO2. It carries out the reaction a (3R)-3-{[carboxy(hydroxy)methyl]amino}fatty acid + 2-oxoglutarate + O2 = a (3R)-3-isocyanyl-fatty acid + succinate + 2 CO2 + 2 H2O. Its function is as follows. Involved in the biosynthesis of a unique class of isonitrile lipopeptides (INLPs) that seem to play a role in metal acquisition. Catalyzes the conversion of (3R)-3-[(carboxymethyl)amino]fatty acids to (3R)-3-isocyanyl-fatty acids through an oxidative decarboxylation mechanism, thereby generating the isonitrile group of INLPs. The chain is (3R)-3-[(carboxymethyl)amino]fatty acid oxygenase/decarboxylase from Mycobacterium bovis (strain ATCC BAA-935 / AF2122/97).